Reading from the N-terminus, the 90-residue chain is Acylphosphatase (90 aa).

An Acylphosphatase-like domain is found at 3–90; it reads RYSAIVQGRV…DGEKKFSIKY (88 aa). Active-site residues include Arg-18 and Asn-36.

This sequence belongs to the acylphosphatase family.

The enzyme catalyses an acyl phosphate + H2O = a carboxylate + phosphate + H(+). In Clostridium beijerinckii (strain ATCC 51743 / NCIMB 8052) (Clostridium acetobutylicum), this protein is Acylphosphatase (acyP).